The primary structure comprises 397 residues: Succinyl-diaminopimelate desuccinylase (397 aa).

His73 is a Zn(2+) binding site. The active site involves Asp75. Asp106 provides a ligand contact to Zn(2+). The active-site Proton acceptor is the Glu140. Residues Glu141, Glu169, and His366 each contribute to the Zn(2+) site.

The protein belongs to the peptidase M20A family. DapE subfamily. In terms of assembly, homodimer. Zn(2+) serves as cofactor. Co(2+) is required as a cofactor.

The catalysed reaction is N-succinyl-(2S,6S)-2,6-diaminopimelate + H2O = (2S,6S)-2,6-diaminopimelate + succinate. It participates in amino-acid biosynthesis; L-lysine biosynthesis via DAP pathway; LL-2,6-diaminopimelate from (S)-tetrahydrodipicolinate (succinylase route): step 3/3. In terms of biological role, catalyzes the hydrolysis of N-succinyl-L,L-diaminopimelic acid (SDAP), forming succinate and LL-2,6-diaminopimelate (DAP), an intermediate involved in the bacterial biosynthesis of lysine and meso-diaminopimelic acid, an essential component of bacterial cell walls. This chain is Succinyl-diaminopimelate desuccinylase, found in Rhizobium rhizogenes (strain K84 / ATCC BAA-868) (Agrobacterium radiobacter).